We begin with the raw amino-acid sequence, 510 residues long: Bifunctional purine biosynthesis protein PurH (510 aa).

In terms of domain architecture, MGS-like spans Met-1–Val-144.

This sequence belongs to the PurH family.

The enzyme catalyses (6R)-10-formyltetrahydrofolate + 5-amino-1-(5-phospho-beta-D-ribosyl)imidazole-4-carboxamide = 5-formamido-1-(5-phospho-D-ribosyl)imidazole-4-carboxamide + (6S)-5,6,7,8-tetrahydrofolate. It carries out the reaction IMP + H2O = 5-formamido-1-(5-phospho-D-ribosyl)imidazole-4-carboxamide. It participates in purine metabolism; IMP biosynthesis via de novo pathway; 5-formamido-1-(5-phospho-D-ribosyl)imidazole-4-carboxamide from 5-amino-1-(5-phospho-D-ribosyl)imidazole-4-carboxamide (10-formyl THF route): step 1/1. Its pathway is purine metabolism; IMP biosynthesis via de novo pathway; IMP from 5-formamido-1-(5-phospho-D-ribosyl)imidazole-4-carboxamide: step 1/1. The sequence is that of Bifunctional purine biosynthesis protein PurH from Clostridioides difficile (strain 630) (Peptoclostridium difficile).